A 213-amino-acid chain; its full sequence is MAETYDFLFKFLVIGSAGTGKSCLLHQFIENKFKQDSNHTIGVEFGSRVVNVGGKTVKLQIWDTAGQERFRSVTRSYYRGAAGALLVYDITSRETYNSLAAWLTDARTLASPNIVVILCGNKKDLDPEREVTFLEASRFAQENELMFLETSALTGENVEEAFLKCARTILNKIDSGELDPERMGSGIQYGDISLRQLRQPRSAQAVAPQPCGC.

The residue at position 2 (Ala-2) is an N-acetylalanine. 6 residues coordinate GDP: Gly-18, Thr-19, Gly-20, Lys-21, Ser-22, and Cys-23. Gly-18, Thr-19, Gly-20, Lys-21, Ser-22, Cys-23, Ser-37, His-39, and Thr-40 together coordinate GTP. Ser-22 is a binding site for Mg(2+). Residues 39–44 (HTIGVE) carry the Switch 1 motif. 2 residues coordinate Mg(2+): Thr-40 and Asp-63. Residues 65–74 (AGQERFRSVT) carry the Switch 2 motif. Residue Gly-66 participates in GTP binding. Gln-67 bears the 5-glutamyl serotonin mark. Residues Asn-121, Lys-122, Asp-124, Ala-152, and Leu-153 each contribute to the GDP site. Residues Asn-121, Lys-122, Asp-124, Ala-152, and Leu-153 each contribute to the GTP site. 2 positions are modified to phosphoserine: Ser-185 and Ser-193. 2 S-geranylgeranyl cysteine lipidation sites follow: Cys-211 and Cys-213. At Cys-213 the chain carries Cysteine methyl ester.

Belongs to the small GTPase superfamily. Rab family. As to quaternary structure, interacts (GTP-bound form) with RUFY1; the interaction allows endosomal tethering and fusion. Mg(2+) serves as cofactor. In terms of processing, serotonylation of Gln-67 by TGM2 during activation and aggregation of platelets leads to constitutive activation of GTPase activity.

The protein localises to the cell membrane. Its subcellular location is the early endosome membrane. The enzyme catalyses GTP + H2O = GDP + phosphate + H(+). With respect to regulation, regulated by guanine nucleotide exchange factors (GEFs) which promote the exchange of bound GDP for free GTP. Regulated by GTPase activating proteins (GAPs) which increase the GTP hydrolysis activity. Inhibited by GDP dissociation inhibitors (GDIs). Its function is as follows. The small GTPases Rab are key regulators of intracellular membrane trafficking, from the formation of transport vesicles to their fusion with membranes. Rabs cycle between an inactive GDP-bound form and an active GTP-bound form that is able to recruit to membranes different set of downstream effectors directly responsible for vesicle formation, movement, tethering and fusion. RAB4B mediates endosomal tethering and fusion through the interaction with RUFY1 and RAB14. Acts as a regulator of platelet alpha-granule release during activation and aggregation of platelets. The protein is Ras-related protein Rab-4B of Mus musculus (Mouse).